The chain runs to 264 residues: MHSCWKMKLQNEKTLGHSVSRSSNISKAGSPTSVSAPSSFPRTSVTPSSQDICRICHCEGDDESPLITPCHCTGSLHFVHQACLQQWIKSSDTRCCELCKFEFIMETKLKPLRKWEKLQMTASERRKIMCSVTFHVIAITCVVWSLYVLIDRTAEEIKMGQNNGILEWPFWTKLVVVAIGFTGGLLFMYVQCKVYVQLWKRLKAYNRVIYVQNCPETCKKKIFEKSVIIEPNLESKEALGIHHSDTNSSYYTEPEDCGAAILQV.

The interval 15–47 is disordered; the sequence is LGHSVSRSSNISKAGSPTSVSAPSSFPRTSVTP. The segment covering 17–47 has biased composition (polar residues); that stretch reads HSVSRSSNISKAGSPTSVSAPSSFPRTSVTP. An RING-CH-type zinc finger spans residues 45 to 106; sequence VTPSSQDICR…ELCKFEFIME (62 aa). 8 residues coordinate Zn(2+): C53, C56, C70, C72, H80, C83, C96, and C99. The next 2 helical transmembrane spans lie at 130 to 150 and 170 to 190; these read CSVT…YVLI and FWTK…FMYV.

The protein resides in the cytoplasmic vesicle membrane. It localises to the lysosome membrane. Its subcellular location is the early endosome membrane. It catalyses the reaction S-ubiquitinyl-[E2 ubiquitin-conjugating enzyme]-L-cysteine + [acceptor protein]-L-lysine = [E2 ubiquitin-conjugating enzyme]-L-cysteine + N(6)-ubiquitinyl-[acceptor protein]-L-lysine.. Its pathway is protein modification; protein ubiquitination. In terms of biological role, E3 ubiquitin-protein ligase that mediates ubiquitination of cd86 and MHC class II proteins, such as hla-dr alpha and beta, and promotes their subsequent endocytosis and sorting to lysosomes via multivesicular bodies. This is E3 ubiquitin-protein ligase MARCHF8 (marchf8) from Xenopus tropicalis (Western clawed frog).